A 255-amino-acid polypeptide reads, in one-letter code: Hydroxyacylglutathione hydrolase (255 aa).

Zn(2+)-binding residues include His52, His54, Asp56, His57, His109, Asp126, and His166.

It belongs to the metallo-beta-lactamase superfamily. Glyoxalase II family. In terms of assembly, monomer. Zn(2+) serves as cofactor.

It carries out the reaction an S-(2-hydroxyacyl)glutathione + H2O = a 2-hydroxy carboxylate + glutathione + H(+). The protein operates within secondary metabolite metabolism; methylglyoxal degradation; (R)-lactate from methylglyoxal: step 2/2. Functionally, thiolesterase that catalyzes the hydrolysis of S-D-lactoyl-glutathione to form glutathione and D-lactic acid. The sequence is that of Hydroxyacylglutathione hydrolase from Anaeromyxobacter dehalogenans (strain 2CP-C).